Consider the following 258-residue polypeptide: Snake venom serine protease KN12 (258 aa).

A signal peptide spans 1-18 (MVLIRVLANLLILQLSYA). The propeptide occupies 19–24 (QRSSEL). Positions 25 to 249 (VIGGDECNIN…HLDWIQNIIA (225 aa)) constitute a Peptidase S1 domain. Disulfide bonds link Cys-31-Cys-163, Cys-50-Cys-66, Cys-98-Cys-256, Cys-142-Cys-210, Cys-174-Cys-189, and Cys-200-Cys-225. The active-site Charge relay system is the His-65. The N-linked (GlcNAc...) asparagine glycan is linked to Asn-103. The Charge relay system role is filled by Asp-110. N-linked (GlcNAc...) asparagine glycosylation is found at Asn-121, Asn-122, Asn-154, and Asn-170. Catalysis depends on Ser-204, which acts as the Charge relay system. A glycan (N-linked (GlcNAc...) asparagine) is linked at Asn-251.

It belongs to the peptidase S1 family. Snake venom subfamily. As to quaternary structure, monomer. As to expression, expressed by the venom gland.

The protein localises to the secreted. In terms of biological role, snake venom serine protease that may act in the hemostasis system of the prey. This chain is Snake venom serine protease KN12, found in Trimeresurus stejnegeri (Chinese green tree viper).